The sequence spans 365 residues: UDP-N-acetylglucosamine--N-acetylmuramyl-(pentapeptide) pyrophosphoryl-undecaprenol N-acetylglucosamine transferase (365 aa).

UDP-N-acetyl-alpha-D-glucosamine is bound by residues 12-14 (TGG), Asn-128, Arg-169, Ser-195, and Gln-296.

This sequence belongs to the glycosyltransferase 28 family. MurG subfamily.

The protein localises to the cell inner membrane. The catalysed reaction is di-trans,octa-cis-undecaprenyl diphospho-N-acetyl-alpha-D-muramoyl-L-alanyl-D-glutamyl-meso-2,6-diaminopimeloyl-D-alanyl-D-alanine + UDP-N-acetyl-alpha-D-glucosamine = di-trans,octa-cis-undecaprenyl diphospho-[N-acetyl-alpha-D-glucosaminyl-(1-&gt;4)]-N-acetyl-alpha-D-muramoyl-L-alanyl-D-glutamyl-meso-2,6-diaminopimeloyl-D-alanyl-D-alanine + UDP + H(+). It participates in cell wall biogenesis; peptidoglycan biosynthesis. Its function is as follows. Cell wall formation. Catalyzes the transfer of a GlcNAc subunit on undecaprenyl-pyrophosphoryl-MurNAc-pentapeptide (lipid intermediate I) to form undecaprenyl-pyrophosphoryl-MurNAc-(pentapeptide)GlcNAc (lipid intermediate II). The chain is UDP-N-acetylglucosamine--N-acetylmuramyl-(pentapeptide) pyrophosphoryl-undecaprenol N-acetylglucosamine transferase from Gluconobacter oxydans (strain 621H) (Gluconobacter suboxydans).